We begin with the raw amino-acid sequence, 185 residues long: Prenylated Rab acceptor protein 1 (185 aa).

The Cytoplasmic segment spans residues 1-78 (MAAEKDQQKD…RNVEYYQSNY (78 aa)). The tract at residues 30-54 (AGRERLERRRATIRPWSSFVDQRRF) is required for interaction with prenylated RAB3A and VAMP2. 2 helical membrane-spanning segments follow: residues 79–94 (VFVFLGLILYCVVTSP) and 95–112 (MLLVALAVFFGACYILYL). The Cytoplasmic segment spans residues 113-131 (RTLQSKFVLFGREVSPAHQ). 2 helical membrane-spanning segments follow: residues 132–148 (YALAGGVSFPFFWLAGA) and 149–165 (GSAVFWVLGATLVVIGS). Residues 165–185 (SHAAFHQMEAVDGEELQMEPV) form a required for interaction with GDI1 region. Over 166–185 (HAAFHQMEAVDGEELQMEPV) the chain is Cytoplasmic. Residues 175–185 (VDGEELQMEPV) are required for interaction with prenylated RAB3A and VAMP2. The segment at 175 to 185 (VDGEELQMEPV) is homodimerization.

This sequence belongs to the PRA1 family. As to quaternary structure, homodimer. Interacts with VAMP2 (synaptobrevin-2), prenylated Rab proteins, GDI1, NDRG1 and PCLO.

The protein resides in the cell membrane. It localises to the cytoplasm. Its subcellular location is the golgi apparatus. The protein localises to the cytoplasmic vesicle. It is found in the secretory vesicle. The protein resides in the synaptic vesicle. Functionally, general Rab protein regulator required for vesicle formation from the Golgi complex. May control vesicle docking and fusion by mediating the action of Rab GTPases to the SNARE complexes. In addition it inhibits the removal of Rab GTPases from the membrane by GDI1. The chain is Prenylated Rab acceptor protein 1 (RABAC1) from Canis lupus familiaris (Dog).